The primary structure comprises 255 residues: Folate receptor alpha (255 aa).

The signal sequence occupies residues 1-24 (MAHLMTVQLLLLVMWMAECAQSRA). Intrachain disulfides connect cysteine 35–cysteine 63, cysteine 55–cysteine 103, cysteine 64–cysteine 107, cysteine 87–cysteine 173, cysteine 94–cysteine 144, cysteine 133–cysteine 207, cysteine 137–cysteine 187, and cysteine 150–cysteine 167. An N-linked (GlcNAc...) asparagine glycan is attached at asparagine 67. Residues aspartate 101, tyrosine 105, 122–126 (WRKER), 155–160 (HKGWNW), and serine 194 each bind folate. N-linked (GlcNAc...) asparagine glycosylation occurs at asparagine 159. Residue asparagine 199 is glycosylated (N-linked (GlcNAc...) asparagine). Serine 232 carries the GPI-anchor amidated serine lipid modification. Positions 233 to 255 (GAGFHGTWPLLCSLSLVLLWVIS) are cleaved as a propeptide — removed in mature form.

The protein belongs to the folate receptor family. In terms of processing, the secreted form is derived from the membrane-bound form either by cleavage of the GPI anchor, or/and by proteolysis catalyzed by a metalloprotease. As to expression, detected in kidney proximal tubules (at protein level).

Its subcellular location is the cell membrane. The protein localises to the apical cell membrane. It localises to the basolateral cell membrane. It is found in the secreted. The protein resides in the cytoplasmic vesicle. Its subcellular location is the clathrin-coated vesicle. The protein localises to the endosome. Its function is as follows. Binds to folate and reduced folic acid derivatives and mediates delivery of 5-methyltetrahydrofolate and folate analogs into the interior of cells. Has high affinity for folate and folic acid analogs at neutral pH. Exposure to slightly acidic pH after receptor endocytosis triggers a conformation change that strongly reduces its affinity for folates and mediates their release. Required for normal embryonic development and normal cell proliferation. Required for renal folate reabsorption. This is Folate receptor alpha (Folr1) from Mus musculus (Mouse).